A 54-amino-acid polypeptide reads, in one-letter code: Insulin (54 aa).

3 disulfides stabilise this stretch: Cys-7-Cys-39, Cys-19-Cys-52, and Cys-38-Cys-43.

The protein belongs to the insulin family. As to quaternary structure, heterodimer of a B chain and an A chain linked by two disulfide bonds.

The protein resides in the secreted. In terms of biological role, insulin decreases blood glucose concentration. It increases cell permeability to monosaccharides, amino acids and fatty acids. It accelerates glycolysis, the pentose phosphate cycle, and glycogen synthesis in liver. The protein is Insulin (ins) of Squalus acanthias (Spiny dogfish).